We begin with the raw amino-acid sequence, 515 residues long: mRNA export factor ICP27 homolog (515 aa).

4 residues coordinate Zn(2+): C230, H335, C337, and C342. The segment at 230–342 (CVFNDNGHGD…SNHKCDDVSC (113 aa)) adopts a CHC2-type zinc-finger fold. Residues 398–408 (YSTNHDLPQTS) are compositionally biased toward polar residues. Residues 398-422 (YSTNHDLPQTSHRSHKNHGTPKVKS) form a disordered region. Residues 409–422 (HRSHKNHGTPKVKS) are compositionally biased toward basic residues.

The protein belongs to the HHV-1 ICP27 protein family.

Its subcellular location is the virion tegument. The protein resides in the virion. It localises to the host nucleus. The protein localises to the host cytoplasm. In terms of biological role, immediate early (EI) protein that plays many roles during productive infection including regulation of viral gene expression and nuclear export of intronless viral RNAs. The sequence is that of mRNA export factor ICP27 homolog from Human herpesvirus 6A (strain Uganda-1102) (HHV-6 variant A).